Consider the following 206-residue polypeptide: Translation machinery-associated protein 22 (206 aa).

Positions V98–L169 constitute an SUI1 domain. The interval S184–K206 is disordered. Low complexity predominate over residues N196 to K206.

Belongs to the DENR family. As to quaternary structure, interacts with the 40S ribosomal subunit.

Its subcellular location is the cytoplasm. The polypeptide is Translation machinery-associated protein 22 (TMA22) (Vanderwaltozyma polyspora (strain ATCC 22028 / DSM 70294 / BCRC 21397 / CBS 2163 / NBRC 10782 / NRRL Y-8283 / UCD 57-17) (Kluyveromyces polysporus)).